We begin with the raw amino-acid sequence, 259 residues long: MLSTPPKLPSAHGPVHFPRRSGTGMNRMARSATAVKTLAGLSFKRERAVLKSGMAPVAGADEAGRGPLAGPVVAAAVILDPKRIPAGLDDSKKLTATRREALFDEICATAEVSVVMAPPSRIDRDNIRQATLWALANAVKGLPEDPRLVFVDGNDRPPLECEVEMVIGGDGLIASIAAASIVAKVTRDRLMVGLGAAFPGYGFERHMGYGTAEHGAALRRLGPCRHHRTSFAPVRAQQLVLFETEMLEIEAEPLVDALV.

Positions 1-26 are disordered; sequence MLSTPPKLPSAHGPVHFPRRSGTGMN. In terms of domain architecture, RNase H type-2 spans 55 to 243; sequence APVAGADEAG…VRAQQLVLFE (189 aa). Residues Asp-61, Glu-62, and Asp-152 each coordinate a divalent metal cation.

This sequence belongs to the RNase HII family. The cofactor is Mn(2+). It depends on Mg(2+) as a cofactor.

It localises to the cytoplasm. It catalyses the reaction Endonucleolytic cleavage to 5'-phosphomonoester.. Its function is as follows. Endonuclease that specifically degrades the RNA of RNA-DNA hybrids. In Azorhizobium caulinodans (strain ATCC 43989 / DSM 5975 / JCM 20966 / LMG 6465 / NBRC 14845 / NCIMB 13405 / ORS 571), this protein is Ribonuclease HII.